We begin with the raw amino-acid sequence, 345 residues long: tRNA pseudouridine synthase B (345 aa).

The Nucleophile role is filled by Asp39.

This sequence belongs to the pseudouridine synthase TruB family. Type 1 subfamily.

It catalyses the reaction uridine(55) in tRNA = pseudouridine(55) in tRNA. Functionally, responsible for synthesis of pseudouridine from uracil-55 in the psi GC loop of transfer RNAs. The chain is tRNA pseudouridine synthase B from Rickettsia rickettsii (strain Iowa).